The sequence spans 75 residues: Small ribosomal subunit protein bS18 (75 aa).

This sequence belongs to the bacterial ribosomal protein bS18 family. As to quaternary structure, part of the 30S ribosomal subunit. Forms a tight heterodimer with protein bS6.

In terms of biological role, binds as a heterodimer with protein bS6 to the central domain of the 16S rRNA, where it helps stabilize the platform of the 30S subunit. The polypeptide is Small ribosomal subunit protein bS18 (Idiomarina loihiensis (strain ATCC BAA-735 / DSM 15497 / L2-TR)).